We begin with the raw amino-acid sequence, 84 residues long: Phosphoribosylformylglycinamidine synthase subunit PurS (84 aa).

It belongs to the PurS family. Homodimer. Part of the FGAM synthase complex composed of 1 PurL, 1 PurQ and 2 PurS subunits.

Its subcellular location is the cytoplasm. The catalysed reaction is N(2)-formyl-N(1)-(5-phospho-beta-D-ribosyl)glycinamide + L-glutamine + ATP + H2O = 2-formamido-N(1)-(5-O-phospho-beta-D-ribosyl)acetamidine + L-glutamate + ADP + phosphate + H(+). It functions in the pathway purine metabolism; IMP biosynthesis via de novo pathway; 5-amino-1-(5-phospho-D-ribosyl)imidazole from N(2)-formyl-N(1)-(5-phospho-D-ribosyl)glycinamide: step 1/2. Its function is as follows. Part of the phosphoribosylformylglycinamidine synthase complex involved in the purines biosynthetic pathway. Catalyzes the ATP-dependent conversion of formylglycinamide ribonucleotide (FGAR) and glutamine to yield formylglycinamidine ribonucleotide (FGAM) and glutamate. The FGAM synthase complex is composed of three subunits. PurQ produces an ammonia molecule by converting glutamine to glutamate. PurL transfers the ammonia molecule to FGAR to form FGAM in an ATP-dependent manner. PurS interacts with PurQ and PurL and is thought to assist in the transfer of the ammonia molecule from PurQ to PurL. This Methanothermobacter thermautotrophicus (strain ATCC 29096 / DSM 1053 / JCM 10044 / NBRC 100330 / Delta H) (Methanobacterium thermoautotrophicum) protein is Phosphoribosylformylglycinamidine synthase subunit PurS.